The following is a 285-amino-acid chain: Probable endonuclease 4 (285 aa).

Residues His69, His109, Glu145, Asp179, His182, His216, Asp229, His231, and Glu261 each coordinate Zn(2+).

This sequence belongs to the AP endonuclease 2 family. The cofactor is Zn(2+).

The catalysed reaction is Endonucleolytic cleavage to 5'-phosphooligonucleotide end-products.. Endonuclease IV plays a role in DNA repair. It cleaves phosphodiester bonds at apurinic or apyrimidinic (AP) sites, generating a 3'-hydroxyl group and a 5'-terminal sugar phosphate. The chain is Probable endonuclease 4 from Shigella flexneri serotype 5b (strain 8401).